Consider the following 548-residue polypeptide: MDSQRNLLVIALLFVSFMIWQAWEQDKNPQPQTQQTTQTTTTAAGSAADQGVPASGQGKMITVKTDVLDLTINTHGGDVEQALLPAYPKELGSNEPFQLLETTPQFIYQAQSGLTGRDGPDNPANGPRPLYNVEKDAFVLADGQNELQVPMTYTDAAGNTFTQTFVFKRGDYAVNVNYSVQNTGEKPLEVSTFGQLKQSVNLPPHRDTGSSNFALHTFRGAAYSTPDEKYEKYKFDTIADNENLNVSSKGGWVAMLQQYFATAWIPRNDGTNNFYTANLGNGIVAIGYKAQPVLVQPGQTSAMTSTLWVGPEIQDKMAAVAPHLDLTVDYGWLWFISQPLFKLLKWIHSFVGNWGFSIIIITFIVRGIMYPLTKAQYTSMAKMRMLQPKIQAMRERLGDDKQRQSQEMMALYKAEKVNPLGGCFPLIIQMPIFLALYYMLMGSIELRHAPFALWIHDLSAQDPYYILPILMGVTMFFIQKMSPTTVTDPMQQKIMTFMPVIFTVFFLWFPSGLVLYYIVSNLVTIIQQQLIYRGLEKRGLHSREKKKS.

Residues 6–26 form a helical membrane-spanning segment; the sequence is NLLVIALLFVSFMIWQAWEQD. A disordered region spans residues 28-56; that stretch reads NPQPQTQQTTQTTTTAAGSAADQGVPASG. Over residues 29 to 42 the composition is skewed to low complexity; it reads PQPQTQQTTQTTTT. 4 helical membrane-spanning segments follow: residues 350–370, 424–444, 458–478, and 499–519; these read FVGN…GIMY, FPLI…MGSI, LSAQ…MFFI, and PVIF…YYIV.

It belongs to the OXA1/ALB3/YidC family. Type 1 subfamily. As to quaternary structure, interacts with the Sec translocase complex via SecD. Specifically interacts with transmembrane segments of nascent integral membrane proteins during membrane integration.

It localises to the cell inner membrane. In terms of biological role, required for the insertion and/or proper folding and/or complex formation of integral membrane proteins into the membrane. Involved in integration of membrane proteins that insert both dependently and independently of the Sec translocase complex, as well as at least some lipoproteins. Aids folding of multispanning membrane proteins. This is Membrane protein insertase YidC from Salmonella choleraesuis (strain SC-B67).